A 447-amino-acid chain; its full sequence is MGKKYSMRRRIWQAVIEIIIGTCLLILLLLGLTFFLRQIGQISGSETIRLSLDSDNLTISDIERDMKHYPYDYIIFDNDTSKILGGHYVKSDVPSFVASKQSSHNITEGEITYTYSSNKHFSVVLRQNSMPEFTNHTLRSISYNQFTYLFFFLGEIILIIFSVYHLIREFSKNFQAVQKIALKMGEITTFPEQEESKIIEFDQVLNNLYSKSKELAFLIEAERHEKHDLSFQVAALSHDVKTPLTVLKGNIELLEMTEVNEQQADFIESMKNSLTVFDKYFNTMISYTKLLNDENDYKATISLEDFLIDLSVELEELSTTYQVDYQLVKKTDLTTFYGNTLALSRALINIFVNACQYAKEGEKIVSLSIYDDEKYLYFEIWNNGHPFSEQAKKNAGKLFFTEDTGRSGKHYGIGLSFAQGVALKHQGNLILSNPQKGGAEVILKIKK.

2 helical membrane-spanning segments follow: residues 15–35 (VIEIIIGTCLLILLLLGLTFF) and 147–167 (TYLFFFLGEIILIIFSVYHLI). The Histidine kinase domain maps to 235 to 447 (ALSHDVKTPL…GAEVILKIKK (213 aa)). H238 is subject to Phosphohistidine; by autocatalysis.

Its subcellular location is the cell membrane. The catalysed reaction is ATP + protein L-histidine = ADP + protein N-phospho-L-histidine.. In terms of biological role, member of the two-component regulatory system NisK/NisR involved in the regulation of the biosynthesis of lantibiotic nisin. NisK may function as a membrane-associated protein kinase that phosphorylates NisR in response to environmental signals. This chain is Nisin biosynthesis sensor protein NisK (nisK), found in Lactococcus lactis subsp. lactis (Streptococcus lactis).